The chain runs to 874 residues: Alanine--tRNA ligase (874 aa).

Zn(2+)-binding residues include histidine 564, histidine 568, cysteine 665, and histidine 669.

Belongs to the class-II aminoacyl-tRNA synthetase family. It depends on Zn(2+) as a cofactor.

Its subcellular location is the cytoplasm. The enzyme catalyses tRNA(Ala) + L-alanine + ATP = L-alanyl-tRNA(Ala) + AMP + diphosphate. Catalyzes the attachment of alanine to tRNA(Ala) in a two-step reaction: alanine is first activated by ATP to form Ala-AMP and then transferred to the acceptor end of tRNA(Ala). Also edits incorrectly charged Ser-tRNA(Ala) and Gly-tRNA(Ala) via its editing domain. The polypeptide is Alanine--tRNA ligase (Polaromonas naphthalenivorans (strain CJ2)).